Consider the following 417-residue polypeptide: NADH-quinone oxidoreductase subunit D (417 aa).

It belongs to the complex I 49 kDa subunit family. NDH-1 is composed of 14 different subunits. Subunits NuoB, C, D, E, F, and G constitute the peripheral sector of the complex.

It is found in the cell inner membrane. It carries out the reaction a quinone + NADH + 5 H(+)(in) = a quinol + NAD(+) + 4 H(+)(out). Functionally, NDH-1 shuttles electrons from NADH, via FMN and iron-sulfur (Fe-S) centers, to quinones in the respiratory chain. The immediate electron acceptor for the enzyme in this species is believed to be ubiquinone. Couples the redox reaction to proton translocation (for every two electrons transferred, four hydrogen ions are translocated across the cytoplasmic membrane), and thus conserves the redox energy in a proton gradient. This is NADH-quinone oxidoreductase subunit D from Burkholderia ambifaria (strain ATCC BAA-244 / DSM 16087 / CCUG 44356 / LMG 19182 / AMMD) (Burkholderia cepacia (strain AMMD)).